Reading from the N-terminus, the 237-residue chain is C-type lectin domain family 4 member A (237 aa).

Residues 1 to 48 (MTSEITYAEVRFKNEFKSSGINTASSAASKERTAPHKSNTGFPKLLCA) lie on the Cytoplasmic side of the membrane. Positions 5-10 (ITYAEV) match the ITIM motif motif. A helical; Signal-anchor for type II membrane protein membrane pass occupies residues 49-69 (SLLIFFLLLAISFFIAFVIFF). Topologically, residues 70–237 (QKYSQLLEKK…SVCEMMKIHL (168 aa)) are extracellular. Disulfide bonds link cysteine 106–cysteine 117, cysteine 134–cysteine 230, and cysteine 203–cysteine 222. The 119-residue stretch at 113 to 231 (FSSNCYFIST…CLGPQRSVCE (119 aa)) folds into the C-type lectin domain. Ca(2+)-binding residues include valine 143, asparagine 145, and glutamate 149. Residue asparagine 185 is glycosylated (N-linked (GlcNAc...) asparagine). The Ca(2+) site is built by glutamate 195, serine 197, and glutamate 201. Alpha-D-mannopyranose contacts are provided by residues 195–197 (EPS) and glutamate 201. 207–209 (NFR) serves as a coordination point for N-acetyl-D-glucosamine. Residues asparagine 218, aspartate 219, and glutamate 231 each contribute to the Ca(2+) site.

May interact with PTPN6 via its ITIM motif. Expressed preferentially in hematopoietic tissues. Expressed in all circulating Ag-presenting cells such as dendritic cells, myeloid cells, monocytes, macrophages, B-cells and epidermal Langerhans cells (at protein level). Expressed in peripheral blood leukocytes, neutrophils, moderate quantities in spleen, lymph node, and bone marrow, and at very low levels in thymus.

The protein resides in the cell membrane. C-type lectin receptor that binds carbohydrates mannose and fucose but also weakly interacts with N-acetylglucosamine (GlcNAc) in a Ca(2+)-dependent manner. Involved in regulating immune reactivity. Once triggered by antigen, it is internalized by clathrin-dependent endocytosis and delivers its antigenic cargo into the antigen presentation pathway resulting in cross-priming of CD8(+) T cells. This cross-presentation and cross-priming are enhanced by TLR7 and TLR8 agonists with increased expansion of the CD8(+) T cells, high production of IFNG and TNF with reduced levels of IL4, IL5 and IL13. In plasmacytoid dendritic cells, inhibits TLR9-mediated IFNA and TNF production. May be involved via its ITIM motif (immunoreceptor tyrosine-based inhibitory motifs) in the inhibition of B-cell-receptor-mediated calcium mobilization and protein tyrosine phosphorylation. Its function is as follows. (Microbial infection) Involved in the interaction between HIV-1 virus and dendritic cells. Enhances HIV-1 binding/entry and virus infection. Requires ITIM motif-associated signal transduction pathway involving phosphatases PTPN6 and PTPN11, SYK, Src kinases and MAP kinases. The polypeptide is C-type lectin domain family 4 member A (Homo sapiens (Human)).